The primary structure comprises 225 residues: Cytidylate kinase (225 aa).

10–18 (GPASSGKST) is an ATP binding site.

This sequence belongs to the cytidylate kinase family. Type 1 subfamily.

It is found in the cytoplasm. The catalysed reaction is CMP + ATP = CDP + ADP. The enzyme catalyses dCMP + ATP = dCDP + ADP. This chain is Cytidylate kinase, found in Streptococcus sanguinis (strain SK36).